A 352-amino-acid chain; its full sequence is Phosphoribosylformylglycinamidine cyclo-ligase (352 aa).

This sequence belongs to the AIR synthase family.

It localises to the cytoplasm. The enzyme catalyses 2-formamido-N(1)-(5-O-phospho-beta-D-ribosyl)acetamidine + ATP = 5-amino-1-(5-phospho-beta-D-ribosyl)imidazole + ADP + phosphate + H(+). It participates in purine metabolism; IMP biosynthesis via de novo pathway; 5-amino-1-(5-phospho-D-ribosyl)imidazole from N(2)-formyl-N(1)-(5-phospho-D-ribosyl)glycinamide: step 2/2. This is Phosphoribosylformylglycinamidine cyclo-ligase from Pseudomonas syringae pv. tomato (strain ATCC BAA-871 / DC3000).